Here is a 154-residue protein sequence, read N- to C-terminus: Ubiquitin-conjugating enzyme E2 L5 (154 aa).

The region spanning 2–149 is the UBC core domain; sequence AASRRLMKEL…AEEFTKKYGE (148 aa). The active-site Glycyl thioester intermediate is the Cys-86.

It belongs to the ubiquitin-conjugating enzyme family.

The enzyme catalyses S-ubiquitinyl-[E1 ubiquitin-activating enzyme]-L-cysteine + [E2 ubiquitin-conjugating enzyme]-L-cysteine = [E1 ubiquitin-activating enzyme]-L-cysteine + S-ubiquitinyl-[E2 ubiquitin-conjugating enzyme]-L-cysteine.. Its pathway is protein modification; protein ubiquitination. Catalyzes the covalent attachment of ubiquitin to other proteins. This Homo sapiens (Human) protein is Ubiquitin-conjugating enzyme E2 L5.